The sequence spans 575 residues: Probable methionine--tRNA ligase, mitochondrial (575 aa).

A 'HIGH' region motif is present at residues phenylalanine 52–histidine 62. The 'KMSKS' region signature appears at lysine 352 to serine 356. Position 355 (lysine 355) interacts with ATP.

Belongs to the class-I aminoacyl-tRNA synthetase family.

The protein resides in the mitochondrion matrix. It catalyses the reaction tRNA(Met) + L-methionine + ATP = L-methionyl-tRNA(Met) + AMP + diphosphate. In Dictyostelium discoideum (Social amoeba), this protein is Probable methionine--tRNA ligase, mitochondrial (mmetS).